The following is a 186-amino-acid chain: Protein GrpE (186 aa).

This sequence belongs to the GrpE family. As to quaternary structure, homodimer.

The protein localises to the cytoplasm. Its function is as follows. Participates actively in the response to hyperosmotic and heat shock by preventing the aggregation of stress-denatured proteins, in association with DnaK and GrpE. It is the nucleotide exchange factor for DnaK and may function as a thermosensor. Unfolded proteins bind initially to DnaJ; upon interaction with the DnaJ-bound protein, DnaK hydrolyzes its bound ATP, resulting in the formation of a stable complex. GrpE releases ADP from DnaK; ATP binding to DnaK triggers the release of the substrate protein, thus completing the reaction cycle. Several rounds of ATP-dependent interactions between DnaJ, DnaK and GrpE are required for fully efficient folding. This chain is Protein GrpE, found in Novosphingobium aromaticivorans (strain ATCC 700278 / DSM 12444 / CCUG 56034 / CIP 105152 / NBRC 16084 / F199).